A 447-amino-acid polypeptide reads, in one-letter code: Adenylosuccinate synthetase (447 aa).

GTP is bound by residues glycine 35–lysine 41 and glycine 63–threonine 65. Aspartate 36 acts as the Proton acceptor in catalysis. 2 residues coordinate Mg(2+): aspartate 36 and glycine 63. IMP-binding positions include aspartate 36–lysine 39, asparagine 61–histidine 64, threonine 153, arginine 167, asparagine 245, threonine 260, and arginine 324. Residue histidine 64 is the Proton donor of the active site. Residue valine 320–arginine 326 participates in substrate binding. Residues arginine 326, lysine 352 to aspartate 354, and glycine 435 to glycine 437 contribute to the GTP site.

It belongs to the adenylosuccinate synthetase family. Homodimer. Requires Mg(2+) as cofactor.

Its subcellular location is the cytoplasm. It catalyses the reaction IMP + L-aspartate + GTP = N(6)-(1,2-dicarboxyethyl)-AMP + GDP + phosphate + 2 H(+). Its pathway is purine metabolism; AMP biosynthesis via de novo pathway; AMP from IMP: step 1/2. Functionally, plays an important role in the de novo pathway and in the salvage pathway of purine nucleotide biosynthesis. Catalyzes the first committed step in the biosynthesis of AMP from IMP. This is Adenylosuccinate synthetase from Drosophila sechellia (Fruit fly).